Reading from the N-terminus, the 178-residue chain is Large ribosomal subunit protein uL16 (178 aa).

It belongs to the universal ribosomal protein uL16 family.

The chain is Large ribosomal subunit protein uL16 from Pyrobaculum calidifontis (strain DSM 21063 / JCM 11548 / VA1).